The following is a 66-amino-acid chain: MQTGKVKWFNGEKGFGFIEVEGGEDVFVHFSAIQGDGFKTLEEGQEVSFEIVDGNRGPQAANVTKN.

A CSD domain is found at 4–63; sequence GKVKWFNGEKGFGFIEVEGGEDVFVHFSAIQGDGFKTLEEGQEVSFEIVDGNRGPQAANV.

In terms of assembly, homodimer.

The protein localises to the cytoplasm. This is Cold shock-like protein CspD (cspD) from Bacillus cereus.